Consider the following 201-residue polypeptide: Recombination protein RecR (201 aa).

The C4-type zinc-finger motif lies at 60-75 (CSTCGNVDTADPCMIC). The region spanning 83–178 (GTIIVVEDVS…KVTRLAHGVP (96 aa)) is the Toprim domain.

This sequence belongs to the RecR family.

May play a role in DNA repair. It seems to be involved in an RecBC-independent recombinational process of DNA repair. It may act with RecF and RecO. This chain is Recombination protein RecR, found in Mesorhizobium japonicum (strain LMG 29417 / CECT 9101 / MAFF 303099) (Mesorhizobium loti (strain MAFF 303099)).